Here is a 402-residue protein sequence, read N- to C-terminus: Calcium-responsive transactivator (402 aa).

The interval Met1–Ser148 is N-terminal auto-inhibitory domain; necessary for interaction with SMARCA4/BRG1. Residues Tyr50–Ile53 carry the SH2-binding motif. Disordered stretches follow at residues Gln72 to Gln171 and Ala221 to Gln402. Over residues Leu85 to Ser106 the composition is skewed to low complexity. 2 stretches are compositionally biased toward polar residues: residues Asn128–Gly149 and Ser161–Gln171. Residues Gly149–Met238 are methionine-rich intra-molecular domain. Residues Met233–Gln251 are compositionally biased toward low complexity. An MFD domain region spans residues Tyr252–Tyr323. A compositionally biased stretch (polar residues) spans Glu261–Tyr277. The segment covering Ser296–Thr305 has biased composition (basic and acidic residues). Positions Gly311–Tyr375 are enriched in low complexity. The segment at Asn340–Gln402 is necessary for nuclear localization. Residues Ser359 to Ser362 carry the SH2-binding motif. Over residues Arg376–Arg388 the composition is skewed to polar residues. The SH3-binding motif lies at Thr377 to Gln385. The segment covering Tyr390–Gln402 has biased composition (low complexity). Residues Glu393–Gln402 are necessary for interaction with CREBBP and for the recruitment of CREBBP to the nuclear bodies. The SH2-binding motif lies at Tyr397–Tyr400.

This sequence belongs to the SS18 family. In terms of assembly, homodimer. Dimerization may be necessary for its function in neuronal dendritic development. Interacts (via C-terminus) with CREBBP (via N-terminus), EP300 and SMARCA4/BRG1. Interacts with the nBAF complex. Association with CREBBP facilitates transcription while the association with SMARCA4/BRG1 suppresses CREST-mediated transcription in resting neurons.

Its subcellular location is the nucleus. It localises to the chromosome. The protein localises to the centromere. The protein resides in the kinetochore. Its function is as follows. Transcriptional activator which is required for calcium-dependent dendritic growth and branching in cortical neurons. Recruits CREB-binding protein (CREBBP) to nuclear bodies. Component of the CREST-BRG1 complex, a multiprotein complex that regulates promoter activation by orchestrating a calcium-dependent release of a repressor complex and a recruitment of an activator complex. In resting neurons, transcription of the c-FOS promoter is inhibited by BRG1-dependent recruitment of a phospho-RB1-HDAC1 repressor complex. Upon calcium influx, RB1 is dephosphorylated by calcineurin, which leads to release of the repressor complex. At the same time, there is increased recruitment of CREBBP to the promoter by a CREST-dependent mechanism, which leads to transcriptional activation. The CREST-BRG1 complex also binds to the NR2B promoter, and activity-dependent induction of NR2B expression involves a release of HDAC1 and recruitment of CREBBP. The chain is Calcium-responsive transactivator (Ss18l1) from Mus musculus (Mouse).